Consider the following 446-residue polypeptide: Actin-related protein 6 (446 aa).

The span at 1 to 11 (MTGRGGAKKSR) shows a compositional bias: basic residues. Residues 1 to 24 (MTGRGGAKKSRAAGPAPPTTTLVL) are disordered.

The protein belongs to the actin family. ARP6 subfamily. Component of the SWR1 chromatin remodeling complex.

It is found in the cytoplasm. The protein localises to the cytoskeleton. It localises to the nucleus. In terms of biological role, component of the SWR1 complex which mediates the ATP-dependent exchange of histone H2A for the H2A variant H2A.Z leading to transcriptional regulation of selected genes by chromatin remodeling. Involved in chromosome stability. In Neurospora crassa (strain ATCC 24698 / 74-OR23-1A / CBS 708.71 / DSM 1257 / FGSC 987), this protein is Actin-related protein 6 (arp-6).